The chain runs to 148 residues: SsrA-binding protein (148 aa).

This sequence belongs to the SmpB family.

Its subcellular location is the cytoplasm. In terms of biological role, required for rescue of stalled ribosomes mediated by trans-translation. Binds to transfer-messenger RNA (tmRNA), required for stable association of tmRNA with ribosomes. tmRNA and SmpB together mimic tRNA shape, replacing the anticodon stem-loop with SmpB. tmRNA is encoded by the ssrA gene; the 2 termini fold to resemble tRNA(Ala) and it encodes a 'tag peptide', a short internal open reading frame. During trans-translation Ala-aminoacylated tmRNA acts like a tRNA, entering the A-site of stalled ribosomes, displacing the stalled mRNA. The ribosome then switches to translate the ORF on the tmRNA; the nascent peptide is terminated with the 'tag peptide' encoded by the tmRNA and targeted for degradation. The ribosome is freed to recommence translation, which seems to be the essential function of trans-translation. The sequence is that of SsrA-binding protein from Azoarcus sp. (strain BH72).